A 514-amino-acid polypeptide reads, in one-letter code: 1-pyrroline-5-carboxylate dehydrogenase (514 aa).

Active-site residues include E286 and C320.

The protein belongs to the aldehyde dehydrogenase family. RocA subfamily.

It catalyses the reaction L-glutamate 5-semialdehyde + NAD(+) + H2O = L-glutamate + NADH + 2 H(+). Its pathway is amino-acid degradation; L-proline degradation into L-glutamate; L-glutamate from L-proline: step 2/2. In Staphylococcus aureus (strain MSSA476), this protein is 1-pyrroline-5-carboxylate dehydrogenase.